The following is a 510-amino-acid chain: ATP synthase subunit alpha (510 aa).

170-177 (GDRQTGKT) contributes to the ATP binding site.

Belongs to the ATPase alpha/beta chains family. As to quaternary structure, F-type ATPases have 2 components, CF(1) - the catalytic core - and CF(0) - the membrane proton channel. CF(1) has five subunits: alpha(3), beta(3), gamma(1), delta(1), epsilon(1). CF(0) has three main subunits: a(1), b(2) and c(9-12). The alpha and beta chains form an alternating ring which encloses part of the gamma chain. CF(1) is attached to CF(0) by a central stalk formed by the gamma and epsilon chains, while a peripheral stalk is formed by the delta and b chains.

Its subcellular location is the cell inner membrane. The catalysed reaction is ATP + H2O + 4 H(+)(in) = ADP + phosphate + 5 H(+)(out). Its function is as follows. Produces ATP from ADP in the presence of a proton gradient across the membrane. The alpha chain is a regulatory subunit. This is ATP synthase subunit alpha from Acidiphilium cryptum (strain JF-5).